A 1173-amino-acid polypeptide reads, in one-letter code: DNA-directed RNA polymerase subunit beta (1173 aa).

A disordered region spans residues 1–23 (MEGSLLVASSTSNNETANTASTD). Residues 8-22 (ASSTSNNETANTAST) are compositionally biased toward low complexity.

Belongs to the RNA polymerase beta chain family. The RNAP catalytic core consists of 2 alpha, 1 beta, 1 beta' and 1 omega subunit. When a sigma factor is associated with the core the holoenzyme is formed, which can initiate transcription.

It carries out the reaction RNA(n) + a ribonucleoside 5'-triphosphate = RNA(n+1) + diphosphate. Its function is as follows. DNA-dependent RNA polymerase catalyzes the transcription of DNA into RNA using the four ribonucleoside triphosphates as substrates. This chain is DNA-directed RNA polymerase subunit beta, found in Paenarthrobacter aurescens (strain TC1).